A 923-amino-acid polypeptide reads, in one-letter code: TBC1 domain family member 2A (923 aa).

Residue Met-1 is modified to N-acetylmethionine. Residues 1 to 39 are disordered; that stretch reads MDGAHENAAESSSSVPRSEEPACSAGGPEVLPPEESEGC. The segment at 1-171 is interaction with CADH1; the sequence is MDGAHENAAE…AGNGPTLRLE (171 aa). Residues 47 to 144 enclose the PH domain; the sequence is PKKLCGYLSK…WLQQLQTKRW (98 aa). 2 disordered regions span residues 146–166 and 232–289; these read FHSS…GNGP and RQAQ…LIQK. An interaction with RAC1 region spans residues 301–439; that stretch reads AEGLTRTRTA…KVTWDFTHPP (139 aa). A coiled-coil region spans residues 308-486; sequence RTAQEKILAL…LNSEIHQVTK (179 aa). The Rab-GAP TBC domain maps to 631 to 823; sequence GVPREHRPRV…RVWDAFLYEG (193 aa). Residues 870 to 904 are a coiled coil; that stretch reads MKQLRQLRRAHRERLEAELHELEQLKAEYLETQSS. A disordered region spans residues 900-923; that stretch reads ETQSSRGPAVPDGCTSEDEGEGEA. Over residues 914–923 the composition is skewed to acidic residues; that stretch reads TSEDEGEGEA. Position 915 is a phosphoserine (Ser-915).

In terms of assembly, interacts with activated RAC1 and CDH1.

Its subcellular location is the cytoplasm. It localises to the cytoplasmic vesicle. The protein localises to the cell junction. Acts as a GTPase-activating protein for RAB7A. Signal effector acting as a linker between RAC1 and RAB7A, leading to RAB7A inactivation and subsequent inhibition of cadherin degradation and reduced cell-cell adhesion. In Ailuropoda melanoleuca (Giant panda), this protein is TBC1 domain family member 2A (TBC1D2).